The chain runs to 155 residues: Small ribosomal subunit protein uS7c (155 aa).

Belongs to the universal ribosomal protein uS7 family. In terms of assembly, part of the 30S ribosomal subunit.

Its subcellular location is the plastid. The protein resides in the chloroplast. Functionally, one of the primary rRNA binding proteins, it binds directly to 16S rRNA where it nucleates assembly of the head domain of the 30S subunit. This Ananas comosus (Pineapple) protein is Small ribosomal subunit protein uS7c (rps7).